A 123-amino-acid polypeptide reads, in one-letter code: Small ribosomal subunit protein bS16 (123 aa).

It belongs to the bacterial ribosomal protein bS16 family.

The sequence is that of Small ribosomal subunit protein bS16 from Treponema pallidum (strain Nichols).